We begin with the raw amino-acid sequence, 787 residues long: Protein FAM149A (787 aa).

Disordered regions lie at residues 22-105 (SPAV…SSGA), 144-175 (GSNS…APGP), 189-226 (EEWT…PTNF), 238-284 (ASES…SWRD), 432-455 (DGDE…GLPP), 573-602 (LQQR…ASSR), and 665-697 (AVQT…SYRG). Residues 37-46 (SVDSGASTSL) are compositionally biased toward polar residues. Composition is skewed to low complexity over residues 51-65 (TLTL…TAAS) and 96-105 (SGSLPSSSGA). A compositionally biased stretch (polar residues) spans 144–155 (GSNSVTASSPRN). Residues 189–200 (EEWTSDSDSQDD) are compositionally biased toward acidic residues. The span at 201 to 220 (PEGRGLSEGLRKQSSEKSKD) shows a compositional bias: basic and acidic residues. Positions 239–250 (SESPSSFSSSGS) are enriched in low complexity. A compositionally biased stretch (polar residues) spans 251–261 (RTPTEAHNSWP). Positions 262–274 (GSSTQSSTTGLST) are enriched in low complexity.

Belongs to the FAM149 family.

In Mus musculus (Mouse), this protein is Protein FAM149A (Fam149a).